A 271-amino-acid polypeptide reads, in one-letter code: Serine protease SP24D (271 aa).

The first 22 residues, 1 to 22 (MTLADRVPLALAALAYLALVSG), serve as a signal peptide directing secretion. Positions 23-49 (VRFHLSEQNDVLPGGSQARRPFFQGAR) are cleaved as a propeptide — activation peptide. The 220-residue stretch at 50 to 269 (IVGGSVASEG…FVTWIQTTMR (220 aa)) folds into the Peptidase S1 domain. Cysteines 75 and 91 form a disulfide. Catalysis depends on charge relay system residues histidine 90 and aspartate 136. Disulfide bonds link cysteine 199–cysteine 211 and cysteine 221–cysteine 246. The active-site Charge relay system is the serine 225.

The protein belongs to the peptidase S1 family. As to expression, highest level of adult expression is in the thorax.

In Anopheles gambiae (African malaria mosquito), this protein is Serine protease SP24D (Sp24D).